The following is a 466-amino-acid chain: Putative transcription factor bHLH041 (466 aa).

3 disordered regions span residues 108–129 (PANS…SLSP), 194–213 (LTGP…KGRA), and 260–289 (RENA…TQLQ). The segment covering 120–129 (PSSSSSSLSP) has biased composition (low complexity). Residues 268 to 279 (EGSGGSGGGGRY) show a composition bias toward gly residues. The 50-residue stretch at 285-334 (ATQLQHMISERKRREKLNESFQALRSLLPPGTKKDKASVLSIAREQLSSL) folds into the bHLH domain.

As to quaternary structure, homodimer.

It is found in the nucleus. The sequence is that of Putative transcription factor bHLH041 (BHLH41) from Arabidopsis thaliana (Mouse-ear cress).